Reading from the N-terminus, the 335-residue chain is MATIIYDNETTFDALKDKTIAIMGYGSQGHAHARNLHESGLNVVVGLRKGSSSWAKAESDGLKVMTVEEAAKAADVIMILLPDEKQASVYYSQIEPSLEAGNALVFAHGFNIHYNQIVPPKDVDVFMVAPKGPGHIVRRTYTEGIGVPGLIAVYQDATGKARDLALAYAKGIGATRAGVYETTFREETETDLFGEQVDLCGGLSALIKTAFEVLVEAGYQPEMAYFETCHEVKLIVDLIYEGGLERMWHSVSNTAEYGGMTVGPRIINEESREAMYEALARIQNGEFAKEFVLEGMVNHPVLKAMERQEKEHPLEVVGKEIRANIPWLNKKIDDD.

The KARI N-terminal Rossmann domain maps to 1 to 182 (MATIIYDNET…GATRAGVYET (182 aa)). NADP(+)-binding positions include 25–28 (YGSQ), R48, S51, S53, and 83–86 (DEKQ). Residue H108 is part of the active site. G134 contributes to the NADP(+) binding site. Residues 183-328 (TFREETETDL…KEIRANIPWL (146 aa)) form the KARI C-terminal knotted domain. Mg(2+) contacts are provided by D191, E195, E227, and E231. S252 contacts substrate.

It belongs to the ketol-acid reductoisomerase family. Requires Mg(2+) as cofactor.

The catalysed reaction is (2R)-2,3-dihydroxy-3-methylbutanoate + NADP(+) = (2S)-2-acetolactate + NADPH + H(+). It catalyses the reaction (2R,3R)-2,3-dihydroxy-3-methylpentanoate + NADP(+) = (S)-2-ethyl-2-hydroxy-3-oxobutanoate + NADPH + H(+). It functions in the pathway amino-acid biosynthesis; L-isoleucine biosynthesis; L-isoleucine from 2-oxobutanoate: step 2/4. The protein operates within amino-acid biosynthesis; L-valine biosynthesis; L-valine from pyruvate: step 2/4. In terms of biological role, involved in the biosynthesis of branched-chain amino acids (BCAA). Catalyzes an alkyl-migration followed by a ketol-acid reduction of (S)-2-acetolactate (S2AL) to yield (R)-2,3-dihydroxy-isovalerate. In the isomerase reaction, S2AL is rearranged via a Mg-dependent methyl migration to produce 3-hydroxy-3-methyl-2-ketobutyrate (HMKB). In the reductase reaction, this 2-ketoacid undergoes a metal-dependent reduction by NADPH to yield (R)-2,3-dihydroxy-isovalerate. The sequence is that of Ketol-acid reductoisomerase (NADP(+)) from Methanosarcina acetivorans (strain ATCC 35395 / DSM 2834 / JCM 12185 / C2A).